The primary structure comprises 715 residues: Discoidin, CUB and LCCL domain-containing protein 1 (715 aa).

The first 34 residues, 1–34, serve as a signal peptide directing secretion; it reads MVPGARGGGALARAAGRGLLALLLAVSAPLRLQA. Residues 35–459 are Extracellular-facing; the sequence is EELGDGCGHL…TSTGINITTV (425 aa). Disulfide bonds link Cys-41–Cys-68 and Cys-94–Cys-112. The CUB domain occupies 41–150; it reads CGHLVTYQDS…RGFLLTYASS (110 aa). Asn-64 carries an N-linked (GlcNAc...) asparagine glycan. N-linked (GlcNAc...) asparagine glycosylation occurs at Asn-124. The LCCL domain occupies 152 to 248; that stretch reads HPDLITCLER…RDGSLSDKRF (97 aa). 2 disulfides stabilise this stretch: Cys-158/Cys-174 and Cys-178/Cys-200. An F5/8 type C domain is found at 248 to 412; that stretch reads FLFTSNGCSR…IALKVELIGC (165 aa). Asn-277 is a glycosylation site (N-linked (GlcNAc...) asparagine). Residues 278–312 are disordered; it reads ESGDQVHWSPGQARLQDQGPSWASGDSSNNHKPRE. The segment covering 295-307 has biased composition (polar residues); sequence QGPSWASGDSSNN. Residues Asn-351, Asn-418, and Asn-455 are each glycosylated (N-linked (GlcNAc...) asparagine). A helical membrane pass occupies residues 460-480; that stretch reads AIPLVLLVVLVFAGMGIFAAF. Residues 481-715 lie on the Cytoplasmic side of the membrane; that stretch reads RKKKKKGSPY…LNQTAMTALL (235 aa). Phosphoserine is present on Ser-513. A Phosphothreonine modification is found at Thr-614. Positions 619-702 are disordered; the sequence is SGYRVPGPQP…SDSYSAPRDC (84 aa).

The protein resides in the membrane. The sequence is that of Discoidin, CUB and LCCL domain-containing protein 1 (DCBLD1) from Homo sapiens (Human).